A 139-amino-acid chain; its full sequence is Holo-[acyl-carrier-protein] synthase (139 aa).

Residues aspartate 8 and glutamate 61 each coordinate Mg(2+).

Belongs to the P-Pant transferase superfamily. AcpS family. The cofactor is Mg(2+).

The protein resides in the cytoplasm. It carries out the reaction apo-[ACP] + CoA = holo-[ACP] + adenosine 3',5'-bisphosphate + H(+). Transfers the 4'-phosphopantetheine moiety from coenzyme A to a Ser of acyl-carrier-protein. In Rhodopseudomonas palustris (strain BisB5), this protein is Holo-[acyl-carrier-protein] synthase.